Consider the following 160-residue polypeptide: Transcription elongation factor GreA (160 aa).

A coiled-coil region spans residues 4 to 70 (QKQYPMTQEG…IEQDIQRIEH (67 aa)).

The protein belongs to the GreA/GreB family.

In terms of biological role, necessary for efficient RNA polymerase transcription elongation past template-encoded arresting sites. The arresting sites in DNA have the property of trapping a certain fraction of elongating RNA polymerases that pass through, resulting in locked ternary complexes. Cleavage of the nascent transcript by cleavage factors such as GreA or GreB allows the resumption of elongation from the new 3'terminus. GreA releases sequences of 2 to 3 nucleotides. This chain is Transcription elongation factor GreA, found in Staphylococcus carnosus (strain TM300).